Here is a 309-residue protein sequence, read N- to C-terminus: tRNA pseudouridine synthase B (309 aa).

Residue aspartate 39 is the Nucleophile of the active site.

The protein belongs to the pseudouridine synthase TruB family. Type 1 subfamily.

The enzyme catalyses uridine(55) in tRNA = pseudouridine(55) in tRNA. Its function is as follows. Responsible for synthesis of pseudouridine from uracil-55 in the psi GC loop of transfer RNAs. This is tRNA pseudouridine synthase B from Bacillus licheniformis (strain ATCC 14580 / DSM 13 / JCM 2505 / CCUG 7422 / NBRC 12200 / NCIMB 9375 / NCTC 10341 / NRRL NRS-1264 / Gibson 46).